The sequence spans 326 residues: MTKYAKIIGTGSYLPPRRVTNQDLAAQLAEKGIETSDEWIFSRSGISARHWADPDVASSDLAVKAAEQAIEAAGIDRQSIDLILVATSTPDFVFPSTACIIQNKLGINNQCAAFDLQAVCSGFVYALATADKFIRSGSHRNVLVIGTEVFSRILDFNDRTTCVLFGDGAGAVVLSASDEPGILSTAMHSDGSHVGILCVPGNVHGGAIAGNAFLHMDGQAVFKLAVTVLDKVARETMAAAEIQPEQIDWLIPHQANIRIMQGTARKLGLPAERMIAVVHEHGNTSAASIPLALDAAVRDGRIRPGQTVLMEGVGGGFTWGAALLRM.

Catalysis depends on residues C120 and H253. The segment at 254 to 258 (QANIR) is ACP-binding. N283 is a catalytic residue.

Belongs to the thiolase-like superfamily. FabH family. In terms of assembly, homodimer.

The protein resides in the cytoplasm. It catalyses the reaction malonyl-[ACP] + acetyl-CoA + H(+) = 3-oxobutanoyl-[ACP] + CO2 + CoA. The protein operates within lipid metabolism; fatty acid biosynthesis. Catalyzes the condensation reaction of fatty acid synthesis by the addition to an acyl acceptor of two carbons from malonyl-ACP. Catalyzes the first condensation reaction which initiates fatty acid synthesis and may therefore play a role in governing the total rate of fatty acid production. Possesses both acetoacetyl-ACP synthase and acetyl transacylase activities. Its substrate specificity determines the biosynthesis of branched-chain and/or straight-chain of fatty acids. The protein is Beta-ketoacyl-[acyl-carrier-protein] synthase III of Cupriavidus pinatubonensis (strain JMP 134 / LMG 1197) (Cupriavidus necator (strain JMP 134)).